We begin with the raw amino-acid sequence, 89 residues long: Small ribosomal subunit protein uS15 (89 aa).

Belongs to the universal ribosomal protein uS15 family. In terms of assembly, part of the 30S ribosomal subunit. Forms a bridge to the 50S subunit in the 70S ribosome, contacting the 23S rRNA.

Its function is as follows. One of the primary rRNA binding proteins, it binds directly to 16S rRNA where it helps nucleate assembly of the platform of the 30S subunit by binding and bridging several RNA helices of the 16S rRNA. Functionally, forms an intersubunit bridge (bridge B4) with the 23S rRNA of the 50S subunit in the ribosome. The polypeptide is Small ribosomal subunit protein uS15 (Pelodictyon phaeoclathratiforme (strain DSM 5477 / BU-1)).